The following is a 398-amino-acid chain: uncharacterized protein (398 aa).

This is an uncharacterized protein from Ostreid herpesvirus 1 (isolate France) (OsHV-1).